Here is a 177-residue protein sequence, read N- to C-terminus: Large ribosomal subunit protein uL6 (177 aa).

The protein belongs to the universal ribosomal protein uL6 family. Part of the 50S ribosomal subunit.

Its function is as follows. This protein binds to the 23S rRNA, and is important in its secondary structure. It is located near the subunit interface in the base of the L7/L12 stalk, and near the tRNA binding site of the peptidyltransferase center. This Pseudoalteromonas atlantica (strain T6c / ATCC BAA-1087) protein is Large ribosomal subunit protein uL6.